A 490-amino-acid polypeptide reads, in one-letter code: Transcription factor MYB101 (490 aa).

The disordered stretch occupies residues 1–21; the sequence is MDGGGETTATATMEGRGLKKG. 2 HTH myb-type domains span residues 15–67 and 68–122; these read GRGL…ANHL and RPNL…KRRQ. 2 DNA-binding regions (H-T-H motif) span residues 43-67 and 95-118; these read WNAV…ANHL and WARM…NTRM. A disordered region spans residues 168-206; that stretch reads YTNSSNTSSSSSSFSSSSSQPSKRLRPDPLVSTNPGLNP. A compositionally biased stretch (low complexity) spans 169 to 186; the sequence is TNSSNTSSSSSSFSSSSS.

As to expression, present mostly in flowers, siliques and floral shoot tips. Expression is restricted to the subapical pith cells of both vegetative and flowering plants and to the hypocotyl hook. Expressed in pollen grains and pollen tube. Mostly expressed in mature pollen grains, and, to a lower extent, in inflorescences and siliques.

It is found in the nucleus. In terms of biological role, transcription activator. Binds to 5'-CAACTGTC-3' and/or 5'-TAACAAA-3' motif in target gene promoter (e.g. alpha-amylase) to promote their expression. Positive regulator of abscisic acid (ABA) responses leading to growth arrest during seed germination. Promotes the expression of aleurone-related genes (e.g. CP1, CP, GASA1, BXL1 and BXL2) in seeds. Together with MYB33 and MYB65, promotes the programmed cell death (PCD) leading to vacuolation of protein storage vacuoles (PSVs) in the aleurone layers during seed germination. Maybe involved in the regulation of leaves lamina morphogenesis. Involved in pollen grain development. Together with MYB97 and MYB120, functions as a male factor that controls pollen tube-synergid interaction in fertilization. Required for pollen tube growth arrest and sperm cell release in the female gametophyte, probably via the regulation of pollen tube-specific gene expression. This is Transcription factor MYB101 from Arabidopsis thaliana (Mouse-ear cress).